The following is a 122-amino-acid chain: Bet1-like SNARE 1-1 (122 aa).

Over 1 to 103 (MNPRREPRGG…VFETKSSRRM (103 aa)) the chain is Cytoplasmic. The t-SNARE coiled-coil homology domain occupies 32–94 (EINEHENERA…SGTMDRFKTV (63 aa)). S56 carries the post-translational modification Phosphoserine. A helical; Anchor for type IV membrane protein transmembrane segment spans residues 104–121 (LTLVASFVGLFLVIYYLT). Position 122 (R122) is a topological domain, vesicular.

Belongs to the BET1 family.

The protein localises to the golgi apparatus membrane. The protein resides in the endoplasmic reticulum membrane. In terms of biological role, required for vesicular transport from the ER to the Golgi complex. Functions as a SNARE associated with ER-derived vesicles. In Arabidopsis thaliana (Mouse-ear cress), this protein is Bet1-like SNARE 1-1 (BET11).